Here is a 194-residue protein sequence, read N- to C-terminus: Putative manganese efflux pump MntP (194 aa).

Helical transmembrane passes span 2–22, 40–60, 67–87, 107–129, 133–155, and 168–188; these read TPGA…AAAV, FVFG…GLVA, VDHW…IWEA, ALIA…LAFI, IWVI…MLIG, and LIGG…HTGV.

It belongs to the MntP (TC 9.B.29) family.

The protein localises to the cell inner membrane. Probably functions as a manganese efflux pump. The protein is Putative manganese efflux pump MntP of Rhodopseudomonas palustris (strain BisA53).